Consider the following 91-residue polypeptide: Bacterial microcompartment shell protein PduJ (91 aa).

Residues 4–88 (ALGLVETKGL…PHSDVEAILP (85 aa)) form the BMC domain.

The protein belongs to the bacterial microcompartments protein family. Homohexamer with a central pore of about 5.7 Angstroms in diameter. Interacts with PduP, which targets PduP to the BMC.

The protein localises to the bacterial microcompartment. The protein operates within polyol metabolism; 1,2-propanediol degradation. One of the major shell proteins of the bacterial microcompartment (BMC) dedicated to 1,2-propanediol (1,2-PD) degradation. The isolated BMC shell component protein ratio for J:A:B':B:K:T:U is approximately 15:10:7:6:1:1:2. At least one of PduA or PduJ is required for BMC assembly; it must be encoded as the first gene in the pdu operon. Required for structural integrity of BMCs and to mitigate propionaldehyde toxicity, probably joins facets responsible for BMC closure. Edge residues (particularly Lys-25) are important for function and assembly of the BMC. 80% identical to PduA; although their pore regions appear structurally identical, unlike PduA plays no role in 1,2-PD diffusion into or out of the BMC shell. If pduJ is cloned in the chromosomal position of pduA it is able to complement a pduA deletion; it then has a functional pore as it assumes the transport functions of PduA. Overexpression of this protein leads to aberrant filaments that extend the length of the cell, cross the cleavage furrow and impair division. The filaments form nanotubes with a hollow center. Modeling suggests PduJ is probably the hub for binding multiple enzymes to the interior of the BMC; modeling suggests PduC, PduD, PduG and PduM are targeted to PduJ. Functionally, the 1,2-propanediol (1,2-PD) degradation bacterial microcompartment (BMC) concentrates low levels of 1,2-PD catabolic enzymes, concentrates volatile reaction intermediates thus enhancing pathway flux and keeps the level of toxic, mutagenic propionaldehyde low. The polypeptide is Bacterial microcompartment shell protein PduJ (Salmonella typhimurium (strain LT2 / SGSC1412 / ATCC 700720)).